A 70-amino-acid polypeptide reads, in one-letter code: Protein SlyX homolog (70 aa).

The tract at residues 51–70 (RMREAEANRPGPTNEPPPHY) is disordered.

Belongs to the SlyX family.

The polypeptide is Protein SlyX homolog (Nitrobacter hamburgensis (strain DSM 10229 / NCIMB 13809 / X14)).